A 315-amino-acid chain; its full sequence is L-lactate dehydrogenase (315 aa).

NAD(+) is bound by residues valine 17, aspartate 38, lysine 43, tyrosine 69, and 83–84; that span reads GA. Substrate-binding positions include glutamine 86, arginine 92, and 124 to 127; that span reads NPVD. NAD(+) is bound by residues 122-124 and serine 147; that span reads ATN. 152-155 provides a ligand contact to substrate; the sequence is DTAR. Arginine 157 and histidine 172 together coordinate beta-D-fructose 1,6-bisphosphate. Histidine 179 acts as the Proton acceptor in catalysis. A Phosphotyrosine modification is found at tyrosine 224. Substrate is bound at residue threonine 233.

This sequence belongs to the LDH/MDH superfamily. LDH family. As to quaternary structure, homotetramer.

The protein localises to the cytoplasm. It carries out the reaction (S)-lactate + NAD(+) = pyruvate + NADH + H(+). Its pathway is fermentation; pyruvate fermentation to lactate; (S)-lactate from pyruvate: step 1/1. With respect to regulation, allosterically activated by fructose 1,6-bisphosphate (FBP). In terms of biological role, catalyzes the conversion of lactate to pyruvate. The protein is L-lactate dehydrogenase of Bacillus pumilus (strain SAFR-032).